Here is a 211-residue protein sequence, read N- to C-terminus: Large ribosomal subunit protein uL3 (211 aa).

The protein belongs to the universal ribosomal protein uL3 family. In terms of assembly, part of the 50S ribosomal subunit. Forms a cluster with proteins L14 and L19.

In terms of biological role, one of the primary rRNA binding proteins, it binds directly near the 3'-end of the 23S rRNA, where it nucleates assembly of the 50S subunit. In Akkermansia muciniphila (strain ATCC BAA-835 / DSM 22959 / JCM 33894 / BCRC 81048 / CCUG 64013 / CIP 107961 / Muc), this protein is Large ribosomal subunit protein uL3.